The following is a 432-amino-acid chain: Cyclic GMP-AMP synthase (432 aa).

110–115 (QGSFQY) serves as a coordination point for GTP. Mg(2+) contacts are provided by aspartate 129 and aspartate 131. Arginine 180 is a binding site for ATP. Mg(2+) is bound at residue aspartate 191. Serine 255 serves as a coordination point for ATP. Positions 283, 297, and 344 each coordinate GTP. The segment at 413–432 (LNAPSKEPSSKPINKTMVSG) is disordered. Residues 423 to 432 (KPINKTMVSG) are compositionally biased toward polar residues.

The protein belongs to the CD-NTase family. A01 subfamily. Mg(2+) is required as a cofactor.

It carries out the reaction GTP + ATP = 3',3'-cGAMP + 2 diphosphate. In terms of biological role, cyclic nucleotide synthase (second messenger synthase) of a CBASS antivirus system. CBASS (cyclic oligonucleotide-based antiphage signaling system) provides immunity against bacteriophage. The CD-NTase protein synthesizes cyclic nucleotides in response to infection; these serve as specific second messenger signals. The signals activate a diverse range of effectors, leading to bacterial cell death and thus abortive phage infection. A type II-C(GA) CBASS system. Catalyzes the synthesis of 3'3'-cyclic GMP-AMP (3'3'-cGAMP) from GTP and ATP, a second messenger in cell signal transduction. Is also able to produce c-di-AMP and c-di-GMP from ATP and GTP, respectively; however, 3'3'-cGAMP is the dominant molecule produced by DncV in vivo, contrary to the 2'3'-cGAMP produced by eukaryotes. By producing cGAMP, down-regulates csgD expression and expression of flagellum regulon genes, which leads to the down-regulation of rdar biofilm formation and flagellum-mediated swimming and swarming motility in a temperature-dependent manner. Controls the activity of cGAMP-activated phospholipase CapV, a patatin-like lipase that is a direct 3',3'-cGAMP receptor encoded in the dncV operon. The protein is Cyclic GMP-AMP synthase of Escherichia coli.